The chain runs to 751 residues: Zinc finger protein 184 (751 aa).

The 72-residue stretch at 28–99 (VTFKDVIVDF…EPSIPVGTCA (72 aa)) folds into the KRAB domain. Ser117, Ser122, and Ser199 each carry phosphoserine. Over residues 191–202 (SNLVTQEPSPEE) the composition is skewed to polar residues. Residues 191–212 (SNLVTQEPSPEETSTKRSIKQN) are disordered. A Glycyl lysine isopeptide (Lys-Gly) (interchain with G-Cter in SUMO2) cross-link involves residue Lys206. 19 consecutive C2H2-type zinc fingers follow at residues 222–244 (CKCN…QRTH), 250–272 (YKCN…QRIH), 278–300 (YKCD…QRIH), 306–328 (YKCD…QRIH), 334–356 (YTCN…QKIH), 362–384 (FKCD…QKIH), 390–412 (YKCN…HMIH), 418–440 (YECN…QKTH), 446–468 (YDCA…LKIH), 474–496 (YKCN…RRIH), 502–524 (FECS…QKTH), 530–552 (YECK…ERIH), 558–580 (YQCH…RKIH), 586–608 (YKCN…KRIH), 614–636 (YECA…QKTH), 642–664 (YQCN…QRIH), 670–692 (YKCN…QNTH), 698–720 (YNCN…QRIH), and 726–748 (FGCN…QRLH).

This sequence belongs to the krueppel C2H2-type zinc-finger protein family. Predominant expression in testis.

It is found in the nucleus. In terms of biological role, may be involved in transcriptional regulation. The protein is Zinc finger protein 184 (ZNF184) of Homo sapiens (Human).